Consider the following 444-residue polypeptide: Glutamyl-tRNA reductase (444 aa).

Substrate-binding positions include 49–52 (TCNR), serine 109, 114–116 (ETQ), and glutamine 120. Residue cysteine 50 is the Nucleophile of the active site. 189–194 (GAGKMG) provides a ligand contact to NADP(+).

Belongs to the glutamyl-tRNA reductase family. In terms of assembly, homodimer.

It catalyses the reaction (S)-4-amino-5-oxopentanoate + tRNA(Glu) + NADP(+) = L-glutamyl-tRNA(Glu) + NADPH + H(+). Its pathway is porphyrin-containing compound metabolism; protoporphyrin-IX biosynthesis; 5-aminolevulinate from L-glutamyl-tRNA(Glu): step 1/2. In terms of biological role, catalyzes the NADPH-dependent reduction of glutamyl-tRNA(Glu) to glutamate 1-semialdehyde (GSA). This chain is Glutamyl-tRNA reductase, found in Bacillus anthracis (strain A0248).